The chain runs to 86 residues: Small ribosomal subunit protein uS17 (86 aa).

Belongs to the universal ribosomal protein uS17 family. In terms of assembly, part of the 30S ribosomal subunit.

Functionally, one of the primary rRNA binding proteins, it binds specifically to the 5'-end of 16S ribosomal RNA. This chain is Small ribosomal subunit protein uS17, found in Bifidobacterium longum (strain DJO10A).